The sequence spans 1349 residues: Adhesion G protein-coupled receptor F5 (1349 aa).

The signal sequence occupies residues 1 to 24; sequence MKSSRTVTLYFVLIVICSSEATWS. The Extracellular segment spans residues 25 to 1016; it reads RPAEPIVHPL…PGSLLKILLD (992 aa). N73, N94, N185, N254, N270, N286, N299, N326, N337, N349, N396, N470, N503, N538, N649, and N666 each carry an N-linked (GlcNAc...) asparagine glycan. The SEA domain maps to 163 to 271; it reads PETYITLKIK…NSFQGTPSNE (109 aa). Ig-like domains follow at residues 268 to 366, 367 to 464, and 469 to 559; these read PSNE…LDVT, PIRI…IAVT, and ANLT…KDVT. Cysteines 291 and 348 form a disulfide. An intrachain disulfide couples C389 to C447. C490 and C543 are oxidised to a cystine. The residue at position 819 (S819) is a Phosphoserine. 3 N-linked (GlcNAc...) asparagine glycosylation sites follow: N820, N958, and N963. Positions 842 to 1006 constitute a GAIN-B domain; it reads TPPFLFHPNV…SILMSPDSPD (165 aa). 2 disulfides stabilise this stretch: C954-C988 and C973-C990. Residues 954 to 1006 form a GPS region; sequence CVFWNFSLANNTGGWDSSGCTVEDDGRDNRDRVFCKCNHLTSFSILMSPDSPD. The tethered agonist stretch occupies residues 994-1009; it reads TSFSILMSPDSPDPGS. The chain crosses the membrane as a helical span at residues 1017 to 1036; it reads IISYIGLGFSIVSLAACLVV. At 1037–1055 the chain is on the cytoplasmic side; the sequence is EAMVWKSVTKNRTSYMRHI. The chain crosses the membrane as a helical span at residues 1056–1078; it reads CIVNIALCLLIADIWFIVAGAIH. At 1079–1097 the chain is on the extracellular side; the sequence is DGHYPLNETACVAATFFIH. N1085 carries an N-linked (GlcNAc...) asparagine glycan. Residues 1098–1120 form a helical membrane-spanning segment; it reads FFYLSVFFWMLTLGLMLFYRLIF. Topologically, residues 1121 to 1131 are cytoplasmic; it reads ILHDASKSTQK. A helical transmembrane segment spans residues 1132–1154; it reads AIAFSLGYGCPLIISSITVGVTQ. The Extracellular portion of the chain corresponds to 1155-1173; that stretch reads PQEVYMRKNACWLNWEDTR. The helical transmembrane segment at 1174–1196 threads the bilayer; it reads ALLAFAIPALIIVVVNVSITVVV. The Cytoplasmic portion of the chain corresponds to 1197-1216; that stretch reads ITKILRPSVGDKPGKQEKSS. Residues 1217–1239 form a helical membrane-spanning segment; the sequence is LFQISKSIGVLTPLLGLTWGFGL. The Extracellular segment spans residues 1240–1248; it reads ATVIQGSNA. The chain crosses the membrane as a helical span at residues 1249–1271; the sequence is VFHIIFTLLNAFQGLFILLFGCL. Residues 1272–1349 lie on the Cytoplasmic side of the membrane; the sequence is WDQKVQEALL…NSSSAYSLLN (78 aa). T1303 bears the Phosphothreonine mark. At S1310 the chain carries Phosphoserine. The span at 1329–1343 shows a compositional bias: low complexity; the sequence is STPETTSSSVENSSS. Residues 1329–1349 form a disordered region; the sequence is STPETTSSSVENSSSAYSLLN.

The protein belongs to the G-protein coupled receptor 2 family. Adhesion G-protein coupled receptor (ADGR) subfamily. Homodimer; disulfide-linked. Heterodimer of 2 chains generated by proteolytic processing; the large extracellular N-terminal fragment and the membrane-bound C-terminal fragment predominantly remain associated and non-covalently linked. Fragment generates by the processing enzyme furin remains attached to the extracellular N-terminal fragment. Interacts (via N-terminal extracellular domain) with SFTPD. In terms of processing, highly glycosylated. Proteolytically cleaved at multiple sites: one in the GPS region of the GAIN-B domain (S1 site) and the other in the SEA domain (S2 site). The proteolytic cleavage at S1 site generates an extracellular subunit and a seven-transmembrane subunit. The proteolytic cleavage at S2 site generates a fragment that undergoes proteolytic cleavage by the processing enzyme furin. Highly expressed in the lung and to a much lesser extent in the kidney and heart. Dense localization in alveolar walls of the lung and in the intercalated cells of the collecting duct of the kidney.

The protein localises to the cell membrane. As an adhesion G protein-coupled receptor (aGPCR) exhibits a large N-terminal extracellular domain containing highly conserved GPCR autoproteolysis-inducing (GAIN) domain. During synthesis, intracellular autoproteolytic processing of nascent chain within the GAIN domain generates a mature protein, consisting of an N-terminal fragment that is non-covalently linked to the C-terminal fragment. The mature protein is routed to the plasma membrane where the N- and C-terminal fragments remain associated, forming the holoreceptor. Dissociation of the aGPCR fragments stimulates G protein signaling through the action of the tethered-peptide agonist stalk that is occluded within the GAIN domain in the holoreceptor form. This dissociation might be induced by ligand binding, such as that of sFNDC4. Receptor that plays a critical role in lung surfactant homeostasis. May play a role in controlling adipocyte function. Functionally, adhesion G protein-coupled receptor. In alveolar type II (ATII or AT2) cells, required for normal lung surfactant homeostasis. Modulation of both surfactant secretion and uptake by ATII cells is mediated by the downstream activation of GNAQ/GNA11 proteins and may be a consequence of increased cortical F-actin assembly induced by ADGRF5 activation. In the kidney, may play a role in the regulation of acid excretion into the primary urine, possibly by regulating the surface expression of V-ATPase proton pump. As a receptor for soluble FNDC4 (sFNDC4), required for proper systemic glucose tolerance, specifically sensitizing white adipose tissue to insulin. Also plays a role in sFNDC4-induced decrease of local inflammation in white adipose tissue. The sequence is that of Adhesion G protein-coupled receptor F5 (Adgrf5) from Rattus norvegicus (Rat).